We begin with the raw amino-acid sequence, 268 residues long: Hydroxyethylthiazole kinase (268 aa).

Met47 lines the substrate pocket. Residues Arg122 and Thr168 each coordinate ATP. Ala195 lines the substrate pocket.

Belongs to the Thz kinase family. The cofactor is Mg(2+).

The enzyme catalyses 5-(2-hydroxyethyl)-4-methylthiazole + ATP = 4-methyl-5-(2-phosphooxyethyl)-thiazole + ADP + H(+). It participates in cofactor biosynthesis; thiamine diphosphate biosynthesis; 4-methyl-5-(2-phosphoethyl)-thiazole from 5-(2-hydroxyethyl)-4-methylthiazole: step 1/1. In terms of biological role, catalyzes the phosphorylation of the hydroxyl group of 4-methyl-5-beta-hydroxyethylthiazole (THZ). This is Hydroxyethylthiazole kinase from Rhizobium rhizogenes (strain K84 / ATCC BAA-868) (Agrobacterium radiobacter).